The sequence spans 305 residues: tRNA pseudouridine synthase B (305 aa).

The Nucleophile role is filled by Asp39.

This sequence belongs to the pseudouridine synthase TruB family. Type 1 subfamily.

The enzyme catalyses uridine(55) in tRNA = pseudouridine(55) in tRNA. Functionally, responsible for synthesis of pseudouridine from uracil-55 in the psi GC loop of transfer RNAs. This is tRNA pseudouridine synthase B from Staphylococcus saprophyticus subsp. saprophyticus (strain ATCC 15305 / DSM 20229 / NCIMB 8711 / NCTC 7292 / S-41).